Consider the following 48-residue polypeptide: AVEKVNSSSSLAEVIDRILDKGIVIDAWVRVSLVGIELLSVEARXVIA.

The protein belongs to the gas vesicle GvpA family. In terms of assembly, the gas vesicle shell is 2 nm thick and consists of a single layer of this protein. It forms helical ribs nearly perpendicular to the long axis of the vesicle.

Its subcellular location is the gas vesicle shell. Its function is as follows. Gas vesicles are hollow, gas filled proteinaceous nanostructures found in some microorganisms. During planktonic growth they allow positioning of the organism at a favorable depth for light or nutrient acquisition. GvpA forms the protein shell. The sequence is that of Gas vesicle protein A from Spirulina sp. (strain CCAP 1475/10).